Consider the following 61-residue polypeptide: L-amino-acid oxidase (61 aa).

43 to 44 (MA) is a binding site for FAD.

The protein belongs to the flavin monoamine oxidase family. FIG1 subfamily. As to quaternary structure, homodimer; non-covalently linked. The cofactor is FAD. In terms of processing, N-glycosylated. Expressed by the venom gland.

It localises to the secreted. The catalysed reaction is an L-alpha-amino acid + O2 + H2O = a 2-oxocarboxylate + H2O2 + NH4(+). The enzyme catalyses L-leucine + O2 + H2O = 4-methyl-2-oxopentanoate + H2O2 + NH4(+). Functionally, catalyzes an oxidative deamination of predominantly hydrophobic and aromatic L-amino acids, thus producing hydrogen peroxide that may contribute to the diverse toxic effects of this enzyme. Shows activity on L-Leu. Exhibits diverse biological activities, such as apoptosis, antibacterial activities against both Gram-negative and Gram-positive bacteria and antiparasitic activities, as well as induction of platelet aggregation. Effects of snake L-amino oxidases on platelets are controversial, since they either induce aggregation or inhibit agonist-induced aggregation. These different effects are probably due to different experimental conditions. This protein may also induce hemorrhage, hemolysis, and edema. This Crotalus durissus cascavella (Northeastern Brazilian rattlesnake) protein is L-amino-acid oxidase.